Consider the following 1240-residue polypeptide: DNA polymerase catalytic subunit (1240 aa).

Residues Met-1–Pro-26 show a composition bias toward low complexity. 3 disordered regions span residues Met-1 to Arg-65, Gly-646 to Gly-695, and Ala-1103 to Pro-1139. The segment covering Asn-44–Gln-56 has biased composition (polar residues). The segment covering Asn-669–Glu-688 has biased composition (acidic residues).

The protein belongs to the DNA polymerase type-B family. In terms of assembly, forms a complex with the ssDNA-binding protein UL29, the DNA polymerase processivity factor, and the alkaline exonuclease. Interacts with the putative helicase-primase complex subunit UL8; this interaction may coordinate leading and lagging strand DNA synthesis at the replication fork.

It is found in the host nucleus. It catalyses the reaction DNA(n) + a 2'-deoxyribonucleoside 5'-triphosphate = DNA(n+1) + diphosphate. The enzyme catalyses Endonucleolytic cleavage to 5'-phosphomonoester.. In terms of biological role, replicates viral genomic DNA. The replication complex is composed of six viral proteins: the DNA polymerase, processivity factor, primase, primase-associated factor, helicase, and ssDNA-binding protein. Additionally, the polymerase contains an intrinsic ribonuclease H (RNase H) activity that specifically degrades RNA/DNA heteroduplexes or duplex DNA substrates in the 5' to 3' direction. Therefore, it can catalyze the excision of the RNA primers that initiate the synthesis of Okazaki fragments at a replication fork during viral DNA replication. The sequence is that of DNA polymerase catalytic subunit from Human herpesvirus 2 (strain 186) (HHV-2).